We begin with the raw amino-acid sequence, 657 residues long: Threonine--tRNA ligase (657 aa).

Residues 1–70 (MSDHKESTGA…NSDAAIEIIT (70 aa)) enclose the TGS domain. A catalytic region spans residues 253-555 (DHRKLGAELE…LIEHTAGNFP (303 aa)). Residues Cys-351, His-402, and His-532 each contribute to the Zn(2+) site.

It belongs to the class-II aminoacyl-tRNA synthetase family. Homodimer. Zn(2+) is required as a cofactor.

It is found in the cytoplasm. It carries out the reaction tRNA(Thr) + L-threonine + ATP = L-threonyl-tRNA(Thr) + AMP + diphosphate + H(+). In terms of biological role, catalyzes the attachment of threonine to tRNA(Thr) in a two-step reaction: L-threonine is first activated by ATP to form Thr-AMP and then transferred to the acceptor end of tRNA(Thr). Also edits incorrectly charged L-seryl-tRNA(Thr). The sequence is that of Threonine--tRNA ligase from Chlorobium chlorochromatii (strain CaD3).